The following is a 522-amino-acid chain: Transcription factor SPT20 homolog (522 aa).

At Ser-284 the chain carries Phosphoserine. 2 disordered regions span residues 361–380 and 408–522; these read DEESDSQMSPSHSSTDDHSN and PVKM…RHES. Low complexity predominate over residues 412–425; that stretch reads SHSSSGSASLSQVS. Residues 433-442 show a composition bias toward polar residues; it reads TETVSVQSSV. Residues 458 to 467 show a composition bias toward low complexity; that stretch reads SSSGNSSSGN. The span at 481-492 shows a compositional bias: pro residues; that stretch reads PTPPPSSKPPTI. Position 482 is a phosphothreonine (Thr-482). The segment covering 506–522 has biased composition (low complexity); the sequence is LSPAALSPASSSQRHES. Phosphoserine is present on residues Ser-507 and Ser-512.

The protein belongs to the SPT20 family. In terms of assembly, interacts with ATG9A. Interacts with MAPK14.

In terms of biological role, required for MAP kinase p38 (MAPK11, MAPK12, MAPK13 and/or MAPK14) activation during gastrulation. Required for down-regulation of E-cadherin during gastrulation by regulating E-cadherin protein level downstream from NCK-interacting kinase (NIK) and independently of the regulation of transcription by FGF signaling and Snail. Required for starvation-induced ATG9A trafficking during autophagy. The chain is Transcription factor SPT20 homolog (SUPT20H) from Pongo abelii (Sumatran orangutan).